Consider the following 672-residue polypeptide: tRNA 5-methylaminomethyl-2-thiouridine biosynthesis bifunctional protein MnmC (672 aa).

Positions 1–241 (MLKVTTAHIH…KRECLQGFKP (241 aa)) are tRNA (mnm(5)s(2)U34)-methyltransferase. Residues 271–672 (IGGGISSLFS…RKLLKGTPVK (402 aa)) form an FAD-dependent cmnm(5)s(2)U34 oxidoreductase region.

In the N-terminal section; belongs to the methyltransferase superfamily. tRNA (mnm(5)s(2)U34)-methyltransferase family. The protein in the C-terminal section; belongs to the DAO family. FAD is required as a cofactor.

The protein resides in the cytoplasm. It catalyses the reaction 5-aminomethyl-2-thiouridine(34) in tRNA + S-adenosyl-L-methionine = 5-methylaminomethyl-2-thiouridine(34) in tRNA + S-adenosyl-L-homocysteine + H(+). Catalyzes the last two steps in the biosynthesis of 5-methylaminomethyl-2-thiouridine (mnm(5)s(2)U) at the wobble position (U34) in tRNA. Catalyzes the FAD-dependent demodification of cmnm(5)s(2)U34 to nm(5)s(2)U34, followed by the transfer of a methyl group from S-adenosyl-L-methionine to nm(5)s(2)U34, to form mnm(5)s(2)U34. The polypeptide is tRNA 5-methylaminomethyl-2-thiouridine biosynthesis bifunctional protein MnmC (Mannheimia succiniciproducens (strain KCTC 0769BP / MBEL55E)).